A 301-amino-acid chain; its full sequence is GTPase Era (301 aa).

Positions 7–175 (YCGFIAIVGR…AAIVRKHLPE (169 aa)) constitute an Era-type G domain. Residues 15 to 22 (GRPNVGKS) form a G1 region. Position 15–22 (15–22 (GRPNVGKS)) interacts with GTP. Residues 41–45 (QTTRH) form a G2 region. A G3 region spans residues 62–65 (DTPG). GTP-binding positions include 62 to 66 (DTPGL) and 124 to 127 (NKVD). Residues 124 to 127 (NKVD) are G4. The G5 stretch occupies residues 154–156 (ISA). Positions 206–283 (LGAELPYSVT…HLELWVKVKS (78 aa)) constitute a KH type-2 domain.

The protein belongs to the TRAFAC class TrmE-Era-EngA-EngB-Septin-like GTPase superfamily. Era GTPase family. As to quaternary structure, monomer.

It is found in the cytoplasm. It localises to the cell inner membrane. Its function is as follows. An essential GTPase that binds both GDP and GTP, with rapid nucleotide exchange. Plays a role in 16S rRNA processing and 30S ribosomal subunit biogenesis and possibly also in cell cycle regulation and energy metabolism. This is GTPase Era from Shigella dysenteriae serotype 1 (strain Sd197).